Reading from the N-terminus, the 224-residue chain is MADEQEIMCKLENIKEIRNKTIQMEKIKSRLRTEFEALESEEKHLREYKQEMDLLLQEKMAHVEELRLIHADINVMENTIKQSESDLNKLLESTRRLHDEYKPLKEHVDALRMTLGLQRLPDLSQEEEKLSLDYFEKQKAEWQTEPQEPPIPESLAAAAAAAQQLQAARKQDARQTATFRQQPPPMKACLSCHQQIHRNAPICPLCKAKSRSRNPKKPKRKPDE.

A coiled-coil region spans residues 12–97 (ENIKEIRNKT…NKLLESTRRL (86 aa)). Disordered stretches follow at residues 166–185 (QAAR…QPPP) and 204–224 (PLCK…KPDE). The segment at 189 to 206 (CLSCHQQIHRNAPICPLC) adopts a C4H2-type zinc-finger fold. Positions 208–224 (AKSRSRNPKKPKRKPDE) are enriched in basic residues.

The protein resides in the nucleus. The protein localises to the cytoplasm. Its subcellular location is the postsynaptic cell membrane. Functionally, plays a role in GABAergic and V2 interneurons differentiation. Involved in motoneuron development and in neuromuscular junction formation. This is Zinc finger C4H2 domain-containing protein (zc4h2) from Danio rerio (Zebrafish).